A 282-amino-acid polypeptide reads, in one-letter code: Formamidopyrimidine-DNA glycosylase (282 aa).

The active-site Schiff-base intermediate with DNA is proline 2. The active-site Proton donor is the glutamate 3. Lysine 60 acts as the Proton donor; for beta-elimination activity in catalysis. Residues histidine 99, arginine 118, and arginine 163 each coordinate DNA. The FPG-type zinc-finger motif lies at 248–282 (WVYGRTGEPCRVCGTSIERLKLGGRSAHFCPRCQA). Arginine 272 serves as the catalytic Proton donor; for delta-elimination activity.

It belongs to the FPG family. Monomer. It depends on Zn(2+) as a cofactor.

The catalysed reaction is Hydrolysis of DNA containing ring-opened 7-methylguanine residues, releasing 2,6-diamino-4-hydroxy-5-(N-methyl)formamidopyrimidine.. The enzyme catalyses 2'-deoxyribonucleotide-(2'-deoxyribose 5'-phosphate)-2'-deoxyribonucleotide-DNA = a 3'-end 2'-deoxyribonucleotide-(2,3-dehydro-2,3-deoxyribose 5'-phosphate)-DNA + a 5'-end 5'-phospho-2'-deoxyribonucleoside-DNA + H(+). In terms of biological role, involved in base excision repair of DNA damaged by oxidation or by mutagenic agents. Acts as a DNA glycosylase that recognizes and removes damaged bases. Has a preference for oxidized purines, such as 7,8-dihydro-8-oxoguanine (8-oxoG). Has AP (apurinic/apyrimidinic) lyase activity and introduces nicks in the DNA strand. Cleaves the DNA backbone by beta-delta elimination to generate a single-strand break at the site of the removed base with both 3'- and 5'-phosphates. This Rippkaea orientalis (strain PCC 8801 / RF-1) (Cyanothece sp. (strain PCC 8801)) protein is Formamidopyrimidine-DNA glycosylase.